The chain runs to 356 residues: Vesicular integral-membrane protein VIP36 (356 aa).

Positions 1–44 (MAAEGWIWRWGWGRRCLGRPGLPGPGPGPATPLFLLLLLGPVVA) are cleaved as a signal peptide. Residues 45 to 322 (DITDGNSEHL…FRSGPLTGWR (278 aa)) are Lumenal-facing. Residues 52–276 (EHLKREHSLI…DIISMKLFQL (225 aa)) enclose the L-type lectin-like domain. 2 residues coordinate a carbohydrate: S96 and D131. Positions 162, 164, and 166 each coordinate Ca(2+). An a carbohydrate-binding site is contributed by 164–166 (YPN). An N-linked (GlcNAc...) asparagine glycan is attached at N183. H190 lines the a carbohydrate pocket. Residue D193 participates in Ca(2+) binding. C202 and C239 are disulfide-bonded. 260 to 262 (GDL) lines the a carbohydrate pocket. Residues 323–345 (VFLLLLCALLGIIVCAVVGAVVF) form a helical membrane-spanning segment. Residues 346–356 (QKRQERNKRFY) lie on the Cytoplasmic side of the membrane.

In terms of assembly, monomer. Ca(2+) serves as cofactor. In terms of tissue distribution, expressed in kidney, liver, intestine, lung, spleen and heart. Low expression in brain.

The protein localises to the golgi apparatus membrane. Functionally, plays a role as an intracellular lectin in the early secretory pathway. Interacts with N-acetyl-D-galactosamine and high-mannose type glycans and may also bind to O-linked glycans. Involved in the transport and sorting of glycoproteins carrying high mannose-type glycans. This is Vesicular integral-membrane protein VIP36 (LMAN2) from Canis lupus familiaris (Dog).